The chain runs to 433 residues: Zuotin (433 aa).

Ser-50 bears the Phosphoserine mark. A J domain is found at Leu-98–Val-170. The segment covering Glu-292–Ala-330 has biased composition (basic and acidic residues). Residues Glu-292–Ala-357 are disordered.

As to quaternary structure, RAC is a heterodimer of the Hsp70/DnaK-type chaperone SSZ1 and the Hsp40/DnaJ-type chaperone ZUO1. RAC associates with ribosomes via ZUO1.

The protein localises to the cytoplasm. In terms of biological role, component of the ribosome-associated complex (RAC), a heterodimeric chaperone complex involved in regulation of accurate translation termination and in folding or maintaining nascent polypeptides in a folding-competent state. RAC stimulates the ATPase activity of the ribosome-associated pool of Hsp70-type chaperones SSB1/SSB2 that bind to the nascent polypeptide chain. ZUO1 can act as a J-protein for SSB1/SSB2 only when associated with SSZ1. This is Zuotin (ZUO1) from Saccharomyces cerevisiae (strain ATCC 204508 / S288c) (Baker's yeast).